The primary structure comprises 310 residues: uncharacterized protein (310 aa).

Disordered regions lie at residues 22–163 (LARQ…PVEH) and 178–209 (EAEA…VEGD). Basic and acidic residues-rich tracts occupy residues 56–66 (IIRDDHHHAGP) and 183–197 (TEVR…ERHA). The segment covering 198–209 (AAAAAGTDVEGD) has biased composition (low complexity). 3 consecutive transmembrane segments (helical) span residues 231–251 (ALVV…FIAF), 257–277 (WNSI…VVSV), and 286–306 (IAST…PLAL).

The protein to M.leprae ML2433.

It is found in the cell membrane. This is an uncharacterized protein from Mycobacterium tuberculosis (strain CDC 1551 / Oshkosh).